The chain runs to 377 residues: Pseudouridylate synthase RPUSD4, mitochondrial (377 aa).

A mitochondrion-targeting transit peptide spans 1–46 (MAAPCLRTPGVQLLSMSSRPGRLFTPGSWSFCSSATSSRPLNAQRL). Asp-153 is an active-site residue.

The protein belongs to the pseudouridine synthase RluA family. In terms of assembly, interacts with 16S mt-rRNA, mt-tRNA(Phe) and mt-tRNA(Met). Forms a regulatory protein-RNA complex, consisting of RCC1L, NGRN, RPUSD3, RPUSD4, TRUB2, FASTKD2 and 16S mt-rRNA.

The protein localises to the mitochondrion matrix. Its subcellular location is the nucleus. It localises to the cytoplasm. It carries out the reaction uridine in 5S rRNA = pseudouridine in 5S rRNA. The enzyme catalyses a uridine in tRNA = a pseudouridine in tRNA. The catalysed reaction is a uridine in mRNA = a pseudouridine in mRNA. Catalyzes uridine to pseudouridine isomerization (pseudouridylation) of different mitochondrial RNA substrates. Acts on position 1397 in 16S mitochondrial ribosomal RNA (16S mt-rRNA). This modification is required for the assembly of 16S mt-rRNA into a functional mitochondrial ribosome. As a component of a functional protein-RNA module, consisting of RCC1L, NGRN, RPUSD3, RPUSD4, TRUB2, FASTKD2 and 16S mt-rRNA, controls 16S mt-rRNA abundance and is required for intra-mitochondrial translation. Acts on position 39 in mitochondrial tRNA(Phe). Also catalyzes pseudouridylation of mRNAs in nucleus: acts as a regulator of pre-mRNA splicing by mediating pseudouridylation of pre-mRNAs at locations associated with alternatively spliced regions. Pseudouridylation of pre-mRNAs near splice sites directly regulates mRNA splicing and mRNA 3'-end processing. This is Pseudouridylate synthase RPUSD4, mitochondrial from Mus musculus (Mouse).